The following is a 504-amino-acid chain: Maturase K (504 aa).

It belongs to the intron maturase 2 family. MatK subfamily.

The protein resides in the plastid. Its subcellular location is the chloroplast. In terms of biological role, usually encoded in the trnK tRNA gene intron. Probably assists in splicing its own and other chloroplast group II introns. In Hamamelis japonica (Japanese witch hazel), this protein is Maturase K.